The sequence spans 94 residues: Acylphosphatase (94 aa).

An Acylphosphatase-like domain is found at 7–94 (AVQARVYGRV…TAPGDFRIVA (88 aa)). Catalysis depends on residues Arg22 and Asn40.

It belongs to the acylphosphatase family.

It catalyses the reaction an acyl phosphate + H2O = a carboxylate + phosphate + H(+). The sequence is that of Acylphosphatase (acyP) from Mesorhizobium japonicum (strain LMG 29417 / CECT 9101 / MAFF 303099) (Mesorhizobium loti (strain MAFF 303099)).